Reading from the N-terminus, the 279-residue chain is Ethanolamine utilization protein EutJ (279 aa).

It belongs to the EutJ family.

It participates in amine and polyamine degradation; ethanolamine degradation. May protect ethanolamine ammonia-lyase (EAL, eutB-eutC) from inhibition, may function in assembling the bacterial microcompartment and/or in refolding EAL, suggesting it may have chaperone activity. Overexpression of eutJ and eutS in E.coli leads to multiple BMC-like structures; eutS expression alone leads to 1 BMC-like structure per cell. Functionally, expression of the eut operon allows this bacteria to use ethanolamine (EA) as a carbon, nitrogen and energy source. It relies on cobalamin (vitamin B12) both as a cofactor for the ethanolamine ammonia-lyase (EAL) activity and to induce the operon. EA enhances bacterial survival in macrophages in a concentration-dependent manner, suggesting it is an important nutrient during infection. This is Ethanolamine utilization protein EutJ from Salmonella typhimurium (strain LT2 / SGSC1412 / ATCC 700720).